A 213-amino-acid chain; its full sequence is Orotate phosphoribosyltransferase (213 aa).

Residue K26 participates in 5-phospho-alpha-D-ribose 1-diphosphate binding. Residue 34-35 (FF) coordinates orotate. Residues 72-73 (YK), R99, K100, K103, H105, and 124-132 (DDVITAGTA) contribute to the 5-phospho-alpha-D-ribose 1-diphosphate site. Residues T128 and R156 each coordinate orotate.

It belongs to the purine/pyrimidine phosphoribosyltransferase family. PyrE subfamily. Homodimer. It depends on Mg(2+) as a cofactor.

The enzyme catalyses orotidine 5'-phosphate + diphosphate = orotate + 5-phospho-alpha-D-ribose 1-diphosphate. It functions in the pathway pyrimidine metabolism; UMP biosynthesis via de novo pathway; UMP from orotate: step 1/2. Catalyzes the transfer of a ribosyl phosphate group from 5-phosphoribose 1-diphosphate to orotate, leading to the formation of orotidine monophosphate (OMP). The polypeptide is Orotate phosphoribosyltransferase (Vibrio vulnificus (strain YJ016)).